We begin with the raw amino-acid sequence, 133 residues long: Arsenate reductase 1 (133 aa).

Residues C10, C82, and C89 each act as nucleophile in the active site. Intrachain disulfides connect C10-C82 and C82-C89.

This sequence belongs to the low molecular weight phosphotyrosine protein phosphatase family. Thioredoxin-coupled ArsC subfamily.

It is found in the cytoplasm. It carries out the reaction arsenate + [thioredoxin]-dithiol + H(+) = arsenite + [thioredoxin]-disulfide + H2O. In terms of biological role, catalyzes the reduction of arsenate [As(V)] to arsenite [As(III)]. The polypeptide is Arsenate reductase 1 (Staphylococcus haemolyticus (strain JCSC1435)).